The chain runs to 1454 residues: Receptor-type tyrosine-protein phosphatase T (1454 aa).

Positions 1–29 (MGSLGGLALCLLRLLLLGLQRPPLPGAGA) are cleaved as a signal peptide. The Extracellular portion of the chain corresponds to 30-770 (QSAAGGCSFD…EKQVDNTVKM (741 aa)). One can recognise an MAM domain in the interval 34-195 (GGCSFDEHYS…VRVLAHPCRK (162 aa)). Asparagine 82, asparagine 102, asparagine 141, and asparagine 212 each carry an N-linked (GlcNAc...) asparagine glycan. An Ig-like C2-type domain is found at 197–288 (PHFLRLQNVE…SGVSNYAELI (92 aa)). Cysteine 217 and cysteine 271 form a disulfide bridge. 3 consecutive Fibronectin type-III domains span residues 295–388 (PIAP…TKCA), 393–487 (GPQN…TEED), and 488–594 (VPGA…SAPS). Asparagine 425, asparagine 514, asparagine 551, asparagine 605, asparagine 658, and asparagine 688 each carry an N-linked (GlcNAc...) asparagine glycan. The Fibronectin type-III 4 domain maps to 670–767 (AELKPSNLPV…VEPEKQVDNT (98 aa)). The chain crosses the membrane as a helical span at residues 771 to 791 (AGVIAGLLMFIIILLGVMLTI). The Cytoplasmic segment spans residues 792–1454 (KRRKLAKKQK…EVALEYLSSF (663 aa)). Positions 800–852 (QKETQSGAQREMGPVASTDKPTAKLGTNRNDEGFSSSSQDVNGFTDGSRGELS) are disordered. Positions 824–841 (LGTNRNDEGFSSSSQDVN) are enriched in polar residues. Tyrosine-protein phosphatase domains follow at residues 902-1156 (FKEE…ILEA) and 1188-1450 (IKDE…ALEY). Residues aspartate 1065, 1097 to 1103 (CSAGAGR), and glutamine 1141 each bind substrate. Cysteine 1097 acts as the Phosphocysteine intermediate in catalysis. Position 1221 is a phosphoserine (serine 1221). The Phosphocysteine intermediate role is filled by cysteine 1391.

The protein belongs to the protein-tyrosine phosphatase family. Receptor class 2B subfamily. As to expression, expression is restricted to the CNS. Distributed throughout the brain and spinal cord.

The protein localises to the membrane. It carries out the reaction O-phospho-L-tyrosyl-[protein] + H2O = L-tyrosyl-[protein] + phosphate. Its function is as follows. May be involved in both signal transduction and cellular adhesion in the CNS. May have specific signaling roles in the tyrosine phosphorylation/dephosphorylation pathway in the anterior compartment of the adult cerebellar cortex. The polypeptide is Receptor-type tyrosine-protein phosphatase T (Ptprt) (Mus musculus (Mouse)).